Reading from the N-terminus, the 115-residue chain is Immunoglobulin kappa variable 5-48 (115 aa).

The signal sequence occupies residues 1–20 (MVSTPQFLVFLLFWIPASRG). The framework-1 stretch occupies residues 21–43 (DILLTQSPAILSVSPGERVSFSC). Cysteine 43 and cysteine 108 are oxidised to a cystine. Residues 44-54 (RASQSIGTSIH) form a complementarity-determining-1 region. Residues 55–69 (WYQQRTNGSPRLLIK) are framework-2. The interval 70-76 (YASESIS) is complementarity-determining-2. Residues 77–108 (GIPSRFSGSGSGTDFTLSINSVESEDIADYYC) form a framework-3 region. The complementarity-determining-3 stretch occupies residues 109-115 (QQSNSWP).

In Mus musculus (Mouse), this protein is Immunoglobulin kappa variable 5-48.